We begin with the raw amino-acid sequence, 205 residues long: MKIANTFIKRGAAGGLDLSQAPGVTLTLAERRRSRQRLDLDEGRGELGMAIERGQTLRDGDVLVAEDGTYVVVRAALEDVARVTAATPWQLARAAYHLGNRHVLLEIAERHLQFEYDAVLIDMLAQLGGVTATRLRAVFEPDVGAYGGGHRHGHDESFGDDYALAQAAYHAHEAHPHAHFHAGGHGHVHSGHGHGGKHGEHDAES.

Positions Ala-178–Gly-196 are enriched in basic residues. The interval Ala-178–Ser-205 is disordered.

Belongs to the UreE family.

It localises to the cytoplasm. Functionally, involved in urease metallocenter assembly. Binds nickel. Probably functions as a nickel donor during metallocenter assembly. The protein is Urease accessory protein UreE of Bordetella pertussis (strain Tohama I / ATCC BAA-589 / NCTC 13251).